We begin with the raw amino-acid sequence, 378 residues long: Spermidine/putrescine import ATP-binding protein PotA (378 aa).

The region spanning 18-248 (VLLSGISKSF…PKNLFVAGFI (231 aa)) is the ABC transporter domain. 50-57 (GPSGCGKT) is a binding site for ATP.

Belongs to the ABC transporter superfamily. Spermidine/putrescine importer (TC 3.A.1.11.1) family. The complex is composed of two ATP-binding proteins (PotA), two transmembrane proteins (PotB and PotC) and a solute-binding protein (PotD).

Its subcellular location is the cell inner membrane. The enzyme catalyses ATP + H2O + polyamine-[polyamine-binding protein]Side 1 = ADP + phosphate + polyamineSide 2 + [polyamine-binding protein]Side 1.. Its function is as follows. Part of the ABC transporter complex PotABCD involved in spermidine/putrescine import. Responsible for energy coupling to the transport system. This Salmonella typhi protein is Spermidine/putrescine import ATP-binding protein PotA.